The following is a 276-amino-acid chain: Large ribosomal subunit protein uL2 (276 aa).

A disordered region spans residues 221 to 276 (RGSAMNPNDHPHGGGEGRAPIGRKSPMTPWGKKARGVKTRDRKKASNALIIRRRKK). Residues 252–276 (KKARGVKTRDRKKASNALIIRRRKK) are compositionally biased toward basic residues.

It belongs to the universal ribosomal protein uL2 family. In terms of assembly, part of the 50S ribosomal subunit. Forms a bridge to the 30S subunit in the 70S ribosome.

Its function is as follows. One of the primary rRNA binding proteins. Required for association of the 30S and 50S subunits to form the 70S ribosome, for tRNA binding and peptide bond formation. It has been suggested to have peptidyltransferase activity; this is somewhat controversial. Makes several contacts with the 16S rRNA in the 70S ribosome. The protein is Large ribosomal subunit protein uL2 of Aster yellows witches'-broom phytoplasma (strain AYWB).